A 547-amino-acid chain; its full sequence is uncharacterized protein (547 aa).

The Cytoplasmic portion of the chain corresponds to 1–19 (MVRLNHAASYFMPIFCSTR). The helical transmembrane segment at 20–40 (PHIVILSALFSISLFSLFYAS) threads the bilayer. Residues 41–64 (SELLLHQYDDPLMFKPNSQDYFRT) are Vacuolar-facing. Residues 65 to 85 (FLLGLFSPFLYYFLKTFLFNI) traverse the membrane as a helical segment. The Cytoplasmic segment spans residues 86–89 (NQRF). The helical transmembrane segment at 90-110 (LILNLIVDFPINDVFMLLILI) threads the bilayer. Residues 111–139 (GLAYPQVQDHEGGTIKHKECSWHIIPRQA) lie on the Vacuolar side of the membrane. Residues 140–160 (YIFGISWALGEFTICIIGNLF) form a helical membrane-spanning segment. The Cytoplasmic segment spans residues 161-340 (NYQEIADPNI…RFIAFSTAYQ (180 aa)). Residue serine 225 is modified to Phosphoserine. The interval 237–271 (PIKPLRSSSSTYGSIRQQPHENKKQLHVPDNSQDD) is disordered. Residues 242–253 (RSSSSTYGSIRQ) show a composition bias toward polar residues. A helical membrane pass occupies residues 341-361 (LVTGLLLMILVVGSNIMLTIG). At 362–394 (ESLILSMYFVYVRGHEGLFTPVVNYFGSRTISN) the chain is on the vacuolar side. A helical membrane pass occupies residues 395 to 415 (FILCVIIPFISLNFLINTSIY). Over 416–523 (LRRELDDWFN…NWRALARNDS (108 aa)) the chain is Cytoplasmic. Residues 524–544 (FVLGVMVSWSLLVFVTGILST) form a helical membrane-spanning segment. The Vacuolar segment spans residues 545 to 547 (VYI).

It is found in the vacuole membrane. This is an uncharacterized protein from Saccharomyces cerevisiae (strain ATCC 204508 / S288c) (Baker's yeast).